The primary structure comprises 278 residues: MNVKKVPNVPGSPALSALLKLGVIGGLGLYCIGSSMYNVDGGHRAIVFNRFTGIKDRVYPEGTHFKIPLFERAIIYDVRSRPYVENSQTGSNDLQTVTIGLRVLTRPMGDRLPEIYRTLGQNYGERVLPSIINETLKAVVAQYNASHLITQREAVSREIRKIVTERAAKFNIALDDVSITNLKFGKEFTEAIEKKQVAAQEAERAKFIVEKAEQDKKSAIIRAQGEAKSAQLIGQAIANNEAFITLRKIEAAREIAQTIAKSANKVYLNSSDLLISKQ.

Topologically, residues 1–14 (MNVKKVPNVPGSPA) are mitochondrial matrix. The chain crosses the membrane as a helical; Signal-anchor for type II membrane protein span at residues 15-37 (LSALLKLGVIGGLGLYCIGSSMY). The Mitochondrial intermembrane segment spans residues 38 to 278 (NVDGGHRAIV…NSSDLLISKQ (241 aa)). Positions 186–220 (KEFTEAIEKKQVAAQEAERAKFIVEKAEQDKKSAI) form a coiled coil.

This sequence belongs to the prohibitin family. As to quaternary structure, component of a prohibitin multimeric complex in mitochondrial membranes.

Its subcellular location is the mitochondrion inner membrane. Its function is as follows. Prohibitin probably acts as a holdase/unfoldase for the stabilization of newly synthesized mitochondrial proteins. This Arabidopsis thaliana (Mouse-ear cress) protein is Prohibitin-7, mitochondrial (PHB7).